The primary structure comprises 208 residues: Crossover junction endodeoxyribonuclease RuvC (208 aa).

Active-site residues include D9, E70, and D143. Residues D9, E70, and D143 each coordinate Mg(2+).

This sequence belongs to the RuvC family. In terms of assembly, homodimer which binds Holliday junction (HJ) DNA. The HJ becomes 2-fold symmetrical on binding to RuvC with unstacked arms; it has a different conformation from HJ DNA in complex with RuvA. In the full resolvosome a probable DNA-RuvA(4)-RuvB(12)-RuvC(2) complex forms which resolves the HJ. It depends on Mg(2+) as a cofactor.

It is found in the cytoplasm. It carries out the reaction Endonucleolytic cleavage at a junction such as a reciprocal single-stranded crossover between two homologous DNA duplexes (Holliday junction).. In terms of biological role, the RuvA-RuvB-RuvC complex processes Holliday junction (HJ) DNA during genetic recombination and DNA repair. Endonuclease that resolves HJ intermediates. Cleaves cruciform DNA by making single-stranded nicks across the HJ at symmetrical positions within the homologous arms, yielding a 5'-phosphate and a 3'-hydroxyl group; requires a central core of homology in the junction. The consensus cleavage sequence is 5'-(A/T)TT(C/G)-3'. Cleavage occurs on the 3'-side of the TT dinucleotide at the point of strand exchange. HJ branch migration catalyzed by RuvA-RuvB allows RuvC to scan DNA until it finds its consensus sequence, where it cleaves and resolves the cruciform DNA. The sequence is that of Crossover junction endodeoxyribonuclease RuvC from Leifsonia xyli subsp. xyli (strain CTCB07).